A 654-amino-acid chain; its full sequence is Protein THALLO (654 aa).

The span at 1-16 shows a compositional bias: basic residues; sequence MGKKGGTLKRSSKSTK. Disordered stretches follow at residues 1 to 23, 35 to 145, and 164 to 212; these read MGKK…DIVE, KQRD…SDDE, and SITA…KDTH. Positions 2-9 match the Nuclear localization signal 1 motif; the sequence is GKKGGTLK. Composition is skewed to acidic residues over residues 44–56, 64–82, and 103–114; these read VNDD…EDDV, GVDD…EEAE, and GDDEMADDDKDK. Positions 140 to 160 form a coiled coil; sequence LSSDDEDIKAEEEEVIRLRAE. A compositionally biased stretch (acidic residues) spans 171 to 181; sequence GLDDDSEEDSD. Over residues 182 to 212 the composition is skewed to basic and acidic residues; sequence RELTMEEISDKGKQATKSITDKKEKGDKDTH. Residues 243–263 adopt a coiled-coil conformation; it reads LSELNDAVEELESKINPVMNK. 3 disordered regions span residues 362–397, 470–492, and 509–654; these read SDSV…HQND, VSTK…DDIG, and KSSE…SIRM. Positions 364–387 are enriched in basic and acidic residues; sequence SVDRITQDTAKPMKIDNAREEKKK. A compositionally biased stretch (acidic residues) spans 524 to 546; the sequence is SDDEDDNDGDNNDMVDNDGESED. The span at 552–561 shows a compositional bias: basic residues; the sequence is VKQKQQAKRA. A compositionally biased stretch (polar residues) spans 588–599; that stretch reads SNQMVSNRGLTR. A Nuclear localization signal 2 motif is present at residues 608 to 615; that stretch reads PRKKYRKN. Positions 645–654 are enriched in polar residues; the sequence is NPNTSRSIRM.

Belongs to the SAS10 family. In terms of assembly, interacts with NUCL1, NUCL2, JMJ14, NOF1 and MPP10 in the nucleus. As to expression, mainly present in tissues undergoing rapid cellular growth and differentiation. Mostly expressed in shoots and flowers, and, to a lower extent, in leaves, siliques, roots and seedlings.

The protein localises to the nucleus. The protein resides in the nucleolus. Its function is as follows. Essential protein during embryogenesis. Involved both in gene transcription regulation and in processing events critical for proper rRNA biogenesis and nucleolar organization during reproduction; contributes to pre-rRNA processing at the 5' external transcribed spacer. Binds RNA. The chain is Protein THALLO from Arabidopsis thaliana (Mouse-ear cress).